The chain runs to 1256 residues: Cohesin subunit SA-3 (1256 aa).

Residues 1–22 (MPTLWSPSTQHHGSSSGSMSSP) are compositionally biased toward low complexity. Residues 1-110 (MPTLWSPSTQ…GGNDKNKSVP (110 aa)) form a disordered region. The segment covering 72 to 83 (RNVRKRAAKRPP) has biased composition (basic residues). The 86-residue stretch at 324–409 (FVHRYRDILP…NRFKDRMVSM (86 aa)) folds into the SCD domain. 2 disordered regions span residues 1096-1169 (RRLQ…GPEL) and 1230-1256 (KLLH…MEDF). Residues 1113–1125 (NSGPTTPTLTSTA) show a composition bias toward polar residues. Over residues 1126 to 1140 (VKRRQSPRTVGKRQK) the composition is skewed to basic residues. Residues 1144–1166 (GPGPGPGPGPGPGPGPGPGPGPG) show a composition bias toward pro residues. A Phosphoserine modification is found at Ser-1234.

It belongs to the SCC3 family. In terms of assembly, component of the meiosis-specific cohesin complex, which also contains the SMC1 (SMC1A or SMC1B) and SMC3 heterodimer. Such complex likely contains RAD21, or the meiosis-specific related protein REC8. Interacts with CCDC79/TERB1; recruiting cohesin to telomeres to develop structural rigidity. Phosphorylated. As to expression, testis specific.

The protein resides in the nucleus. The protein localises to the chromosome. Meiosis specific component of cohesin complex. The cohesin complex is required for the cohesion of sister chromatids after DNA replication. The cohesin complex apparently forms a large proteinaceous ring within which sister chromatids can be trapped. At anaphase, the complex is cleaved and dissociates from chromatin, allowing sister chromatids to segregate. The meiosis-specific cohesin complex probably replaces mitosis specific cohesin complex when it dissociates from chromatin during prophase I. In Rattus norvegicus (Rat), this protein is Cohesin subunit SA-3 (Stag3).